The chain runs to 344 residues: MTTIAVVGATGQVGQVMRTLLEERNFPADTVRFFASPRSAGRKIEFRGTEIEVEDITQATEESLKDIDVALFSAGGTASKQYAPLFAAAGATVVDNSSAWRKDDEVPLIVSEVNPSDKDSLVKGIIANPNCTTMAAMPVLKPLHDAAGLVKLHVSSYQAVSGSGLAGVETLAKQVAAVGDHNVEFVHDGQAADAGDVGPYVSPIAYNVLPFAGNLVDDGTFETDEEQKLRNESRKILGLPDLKVSGTCVRVPVFTGHTLTIHAEFDKAITVEQAQEILGAASGVKLVDVPTPLAAAGIDESLVGRIRQDSTVDDNRGLVLVVSGDNLRKGAALNTIQIAELLVK.

Residues 10-13 (TGQV) and 38-39 (RS) each bind NADP(+). A phosphate-binding site is contributed by R101. The Acyl-thioester intermediate role is filled by C131. Q158 provides a ligand contact to substrate. 161–162 (SG) lines the NADP(+) pocket. K228 provides a ligand contact to phosphate. R250 lines the substrate pocket. Residue H257 is the Proton acceptor of the active site. N326 contributes to the NADP(+) binding site.

Belongs to the aspartate-semialdehyde dehydrogenase family. In terms of assembly, homodimer.

It carries out the reaction L-aspartate 4-semialdehyde + phosphate + NADP(+) = 4-phospho-L-aspartate + NADPH + H(+). It functions in the pathway amino-acid biosynthesis; L-lysine biosynthesis via DAP pathway; (S)-tetrahydrodipicolinate from L-aspartate: step 2/4. Its pathway is amino-acid biosynthesis; L-methionine biosynthesis via de novo pathway; L-homoserine from L-aspartate: step 2/3. The protein operates within amino-acid biosynthesis; L-threonine biosynthesis; L-threonine from L-aspartate: step 2/5. Functionally, catalyzes the NADPH-dependent formation of L-aspartate-semialdehyde (L-ASA) by the reductive dephosphorylation of L-aspartyl-4-phosphate. This is Aspartate-semialdehyde dehydrogenase from Corynebacterium melassecola.